The primary structure comprises 254 residues: Undecaprenyl-diphosphatase (254 aa).

8 consecutive transmembrane segments (helical) span residues 1–21 (MDIIQAIIIGIIEGFTEFLPI), 41–61 (LTKAYEVIIQFAAILAVMLIY), 70–90 (IDLWMKLLFAFLPLAIVGFIF), 97–117 (LFNVQVVAWMFIIGGIIFLIV), 134–154 (VSWTQAWWVGFAQIFSLIPGT), 175–195 (AEFSFLLAIPVMAVVSGYDLL), 209–229 (FLIGFIVAFIVAYATIKLFLV), and 234–254 (FTFVAFGIYRIIFGIFLLMIL).

It belongs to the UppP family.

It localises to the cell inner membrane. It catalyses the reaction di-trans,octa-cis-undecaprenyl diphosphate + H2O = di-trans,octa-cis-undecaprenyl phosphate + phosphate + H(+). Functionally, catalyzes the dephosphorylation of undecaprenyl diphosphate (UPP). Confers resistance to bacitracin. The protein is Undecaprenyl-diphosphatase of Sulfurovum sp. (strain NBC37-1).